Reading from the N-terminus, the 457-residue chain is Aromatic amino acid transport protein AroP (457 aa).

Residues 1–20 (MMDSQQHGEQLKRGLKNRHI) lie on the Cytoplasmic side of the membrane. Residues 21 to 41 (QLIALGGAIGTGLFLGSASVI) form a helical membrane-spanning segment. Position 42 (glutamine 42) is a topological domain, periplasmic. The chain crosses the membrane as a helical span at residues 43–63 (SAGPGIILGYAIAGFIAFLIM). The Cytoplasmic segment spans residues 64–86 (RQLGEMVVEEPVAGSFSHFAYKY). A helical membrane pass occupies residues 87 to 107 (WGGFAGFASGWNYWVLYVLVA). Topologically, residues 108-117 (MAELTAVGKY) are periplasmic. A helical transmembrane segment spans residues 118-138 (IQFWYPEIPTWASAAAFFVII). Topologically, residues 139–155 (NAINLTNVKVFGEMEFW) are cytoplasmic. A helical transmembrane segment spans residues 156-176 (FAIIKVIAVIAMILFGAWLLF). Residues 177–201 (SDTAGPQATVRNLWEQGGFLPHGWT) lie on the Periplasmic side of the membrane. Residues 202-222 (GLVMMMAIIMFSFGGLELVGI) form a helical membrane-spanning segment. The Cytoplasmic segment spans residues 223–240 (TAAEADNPEQSIPKATNQ). Residues 241 to 261 (VIYRILIFYIGSLAVLLSLLP) form a helical membrane-spanning segment. The Periplasmic portion of the chain corresponds to 262–271 (WTRVTADTSP). A helical transmembrane segment spans residues 272–292 (FVLIFHELGDTFVANALNIVV). Over 293–333 (LTAALSVYNSCVYCNSRMLFGLAQQGNAPKALLNVDKRGVP) the chain is Cytoplasmic. The chain crosses the membrane as a helical span at residues 334–354 (VSSILVSAVVTALCVLLNYLA). At 355–358 (PESA) the chain is on the periplasmic side. A helical membrane pass occupies residues 359–379 (FGLLMALVVSALVINWAMISL). Over 380-400 (AHMMFRRAKQQQGVKTRFPAL) the chain is Cytoplasmic. The helical transmembrane segment at 401–421 (FYPFGNVLCLLFMAAVLIIML) threads the bilayer. At 422 to 425 (MTPG) the chain is on the periplasmic side. A helical transmembrane segment spans residues 426–446 (MAISVWLIPVWLLILGVGYLC). Residues 447 to 457 (KEKTAKTVKAH) are Cytoplasmic-facing.

Belongs to the amino acid-polyamine-organocation (APC) superfamily. Amino acid transporter (AAT) (TC 2.A.3.1) family.

It localises to the cell inner membrane. The enzyme catalyses L-phenylalanine(in) + H(+)(in) = L-phenylalanine(out) + H(+)(out). It carries out the reaction L-tryptophan(in) + H(+)(in) = L-tryptophan(out) + H(+)(out). The catalysed reaction is L-tyrosine(in) + H(+)(in) = L-tyrosine(out) + H(+)(out). Functionally, permease that is involved in the active transport across the cytoplasmic membrane of all three aromatic amino acids, phenylalanine, tyrosine and tryptophan. The polypeptide is Aromatic amino acid transport protein AroP (aroP) (Salmonella typhi).